The primary structure comprises 250 residues: Triosephosphate isomerase (250 aa).

Asn8–Lys10 serves as a coordination point for substrate. Residue His96 is the Electrophile of the active site. The Proton acceptor role is filled by Glu169. Residues Gly175, Ser214, and Gly235–Gly236 each bind substrate.

This sequence belongs to the triosephosphate isomerase family. As to quaternary structure, homodimer.

The protein localises to the cytoplasm. It catalyses the reaction D-glyceraldehyde 3-phosphate = dihydroxyacetone phosphate. It participates in carbohydrate biosynthesis; gluconeogenesis. The protein operates within carbohydrate degradation; glycolysis; D-glyceraldehyde 3-phosphate from glycerone phosphate: step 1/1. Functionally, involved in the gluconeogenesis. Catalyzes stereospecifically the conversion of dihydroxyacetone phosphate (DHAP) to D-glyceraldehyde-3-phosphate (G3P). The protein is Triosephosphate isomerase of Oleidesulfovibrio alaskensis (strain ATCC BAA-1058 / DSM 17464 / G20) (Desulfovibrio alaskensis).